Here is a 370-residue protein sequence, read N- to C-terminus: Homoserine O-acetyltransferase (370 aa).

In terms of domain architecture, AB hydrolase-1 spans 44-350 (NAILVAHAWT…AYGHDAFLLE (307 aa)). The Nucleophile role is filled by serine 150. Position 217 (arginine 217) interacts with substrate. Catalysis depends on residues aspartate 311 and histidine 344. Residue aspartate 345 coordinates substrate.

The protein belongs to the AB hydrolase superfamily. MetX family. As to quaternary structure, homodimer.

The protein localises to the cytoplasm. It catalyses the reaction L-homoserine + acetyl-CoA = O-acetyl-L-homoserine + CoA. Its pathway is amino-acid biosynthesis; L-methionine biosynthesis via de novo pathway; O-acetyl-L-homoserine from L-homoserine: step 1/1. Transfers an acetyl group from acetyl-CoA to L-homoserine, forming acetyl-L-homoserine. The protein is Homoserine O-acetyltransferase of Geotalea uraniireducens (strain Rf4) (Geobacter uraniireducens).